The following is a 262-amino-acid chain: DNA repair protein RecO (262 aa).

This sequence belongs to the RecO family.

In terms of biological role, involved in DNA repair and RecF pathway recombination. The chain is DNA repair protein RecO from Enterococcus faecalis (strain ATCC 700802 / V583).